Consider the following 349-residue polypeptide: Short-wave-sensitive opsin 1 (349 aa).

The Extracellular segment spans residues 1–34 (MSKMPEEEEFYLFKNISSVGPWDGPQYHIAPVWA). N-linked (GlcNAc...) asparagine glycosylation is present at Asn15. A helical membrane pass occupies residues 35 to 59 (FQLQAAFMGIVFLAGLPLNSMVLVA). Residues 60 to 71 (TVRYKKLRHPLN) are Cytoplasmic-facing. The helical transmembrane segment at 72–97 (YVLVNVSVGGFLLCIFSVLPVFVNSC) threads the bilayer. Topologically, residues 98 to 111 (NGYFVFGRHVCALE) are extracellular. Cys108 and Cys185 form a disulfide bridge. Residues 112-131 (GFLGTVAGLVTGWSLAFLAF) traverse the membrane as a helical segment. Residues 132 to 150 (ERYIVICKPFGNFRFSSKH) are Cytoplasmic-facing. The helical transmembrane segment at 151–174 (ALMVVLTTWTIGIGVSIPPFFGWS) threads the bilayer. Topologically, residues 175-200 (RYIAEGLQCSCGPDWYTVGTKYRSEY) are extracellular. The helical transmembrane segment at 201-228 (YTWFLFIFCFIVPLSLICFSYAQLLRAL) threads the bilayer. The Cytoplasmic segment spans residues 229–250 (KAVAAQQQESATTQKAEREVSR). Residues 251–274 (MVVVMVGSFCVCYVPYAALAMYMV) form a helical membrane-spanning segment. Topologically, residues 275–282 (NNRNHGLD) are extracellular. A helical transmembrane segment spans residues 283 to 307 (LRLVSIPAFFSKSSCIYNPIIYCFM). Lys294 is subject to N6-(retinylidene)lysine. Residues 308–349 (NKQFRACIMEMVCGKAMTDESDISSSQKTEVSTVSSSQVGPN) lie on the Cytoplasmic side of the membrane.

This sequence belongs to the G-protein coupled receptor 1 family. Opsin subfamily. In terms of processing, phosphorylated on some or all of the serine and threonine residues present in the C-terminal region.

The protein localises to the cell membrane. Its subcellular location is the photoreceptor inner segment. The protein resides in the cell projection. It is found in the cilium. It localises to the photoreceptor outer segment. The protein localises to the cytoplasm. Its subcellular location is the perinuclear region. Functionally, visual pigments are the light-absorbing molecules that mediate vision. They consist of an apoprotein, opsin, covalently linked to cis-retinal. Required for the maintenance of cone outer segment organization in the ventral retina, but not essential for the maintenance of functioning cone photoreceptors. Involved in ensuring correct abundance and localization of retinal membrane proteins. May increase spectral sensitivity in dim light. The chain is Short-wave-sensitive opsin 1 (OPN1SW) from Saimiri boliviensis boliviensis (Bolivian squirrel monkey).